A 183-amino-acid chain; its full sequence is Lipid droplet coating protein mpl1 (183 aa).

This sequence belongs to the perilipin family.

Its subcellular location is the lipid droplet. In terms of biological role, lipid droplet coating protein that regulates lipid metabolism, appressorial turgor pressure, and virulence. Appressorial turgor pressure is important for breaching the insect cuticle during infection. This is Lipid droplet coating protein mpl1 from Metarhizium robertsii (strain ARSEF 23 / ATCC MYA-3075) (Metarhizium anisopliae (strain ARSEF 23)).